The sequence spans 345 residues: Phosphate acyltransferase (345 aa).

Belongs to the PlsX family. Homodimer. Probably interacts with PlsY.

The protein localises to the cytoplasm. It carries out the reaction a fatty acyl-[ACP] + phosphate = an acyl phosphate + holo-[ACP]. It participates in lipid metabolism; phospholipid metabolism. Catalyzes the reversible formation of acyl-phosphate (acyl-PO(4)) from acyl-[acyl-carrier-protein] (acyl-ACP). This enzyme utilizes acyl-ACP as fatty acyl donor, but not acyl-CoA. This is Phosphate acyltransferase from Proteus mirabilis (strain HI4320).